A 211-amino-acid chain; its full sequence is Thymidylate kinase (211 aa).

Position 10–17 (Gly10–Thr17) interacts with ATP.

Belongs to the thymidylate kinase family.

The enzyme catalyses dTMP + ATP = dTDP + ADP. Functionally, phosphorylation of dTMP to form dTDP in both de novo and salvage pathways of dTTP synthesis. The polypeptide is Thymidylate kinase (Trichormus variabilis (strain ATCC 29413 / PCC 7937) (Anabaena variabilis)).